The primary structure comprises 377 residues: Beta-lactamase (377 aa).

An N-terminal signal peptide occupies residues 1 to 19; it reads MFKTTLCALLITASCSTFA. Ser80 acts as the Acyl-ester intermediate in catalysis. A beta-lactam is bound by residues Ser80, Gln136, Tyr166, Asn168, Ala334, and Asn359.

This sequence belongs to the class-C beta-lactamase family. Monomer.

The protein localises to the periplasm. It carries out the reaction a beta-lactam + H2O = a substituted beta-amino acid. With respect to regulation, inhibited by the beta-lactamase-blocking agents avibactam, enmetazobactam, relebactam, nacubactam, vaborbactam, taniborbactam, zidebactam, and beta-lactam-analog boronic acids, via a covalent binding to Ser-80. Inhibited by non-beta-lactam, benzo(b)thiophene-2-boronic acid (BZBTH2B) and various cyclic boronates. Not inhibited by clavulanic acid. Inhibited by O-aryloxycarbonyl hydroxamates, via cross-linking of the active site Ser-80 to Lys-331. Weakly inhibited by citric acid. Functionally, class C beta-lactamase which confers resistance to penicillins and cephalosporins. Has benzylpenicillin- and cephaloridine-hydrolyzing activity. Has weak cefuroxime, cefotaxime, cefoxitin and oxacillin-hydrolyzing activities. The protein is Beta-lactamase of Escherichia coli (strain K12).